Here is a 208-residue protein sequence, read N- to C-terminus: Putative vomeronasal receptor-like protein 4 (208 aa).

Topologically, residues 1–19 (MEMTKLFSYIVIKNVYYPQ) are extracellular. Residues 20–40 (VSFGISANTFLLLFHIFTFAY) form a helical membrane-spanning segment. Topologically, residues 41–48 (THRLKPID) are cytoplasmic. The helical transmembrane segment at 49–69 (MTISHLPLIHILLLFTQAILV) threads the bilayer. At 70–97 (SSDLFESWNIQNNDLKCKIITFLNRVMR) the chain is on the extracellular side. Cysteines 86 and 173 form a disulfide. The helical transmembrane segment at 98-118 (GVSICTTCLLSVLQAITISPS) threads the bilayer. Over 119 to 135 (TSFLEKFKHISANHTLG) the chain is Cytoplasmic. A helical transmembrane segment spans residues 136–156 (FILFSWVLNMFITNNLLLFIV). The Extracellular portion of the chain corresponds to 157 to 183 (PTPNRIGASLLFVTEHCYVLPMSYTHR). Residues 184 to 204 (SLFFILMVLRDVIFIGLMVLS) form a helical membrane-spanning segment. At 205 to 208 (SGYG) the chain is on the cytoplasmic side.

Belongs to the G-protein coupled receptor 1 family. As to expression, expressed in olfactory nerve.

It is found in the cell membrane. Putative pheromone receptor. In Homo sapiens (Human), this protein is Putative vomeronasal receptor-like protein 4 (VN1R17P).